A 475-amino-acid chain; its full sequence is Ribulose bisphosphate carboxylase large chain (475 aa).

The propeptide occupies 1 to 2 (MS). The residue at position 3 (Pro3) is an N-acetylproline. N6,N6,N6-trimethyllysine is present on Lys14. Substrate is bound by residues Asn123 and Thr173. The active-site Proton acceptor is Lys175. Lys177 is a binding site for substrate. Positions 201, 203, and 204 each coordinate Mg(2+). At Lys201 the chain carries N6-carboxylysine. Residue His294 is the Proton acceptor of the active site. 3 residues coordinate substrate: Arg295, His327, and Ser379.

This sequence belongs to the RuBisCO large chain family. Type I subfamily. Heterohexadecamer of 8 large chains and 8 small chains; disulfide-linked. The disulfide link is formed within the large subunit homodimers. Mg(2+) is required as a cofactor. Post-translationally, the disulfide bond which can form in the large chain dimeric partners within the hexadecamer appears to be associated with oxidative stress and protein turnover.

The protein resides in the plastid. It is found in the chloroplast. The catalysed reaction is 2 (2R)-3-phosphoglycerate + 2 H(+) = D-ribulose 1,5-bisphosphate + CO2 + H2O. It catalyses the reaction D-ribulose 1,5-bisphosphate + O2 = 2-phosphoglycolate + (2R)-3-phosphoglycerate + 2 H(+). Its function is as follows. RuBisCO catalyzes two reactions: the carboxylation of D-ribulose 1,5-bisphosphate, the primary event in carbon dioxide fixation, as well as the oxidative fragmentation of the pentose substrate in the photorespiration process. Both reactions occur simultaneously and in competition at the same active site. This is Ribulose bisphosphate carboxylase large chain from Psilotum nudum (Whisk fern).